A 213-amino-acid chain; its full sequence is Ergothioneine transport ATP-binding protein EgtV (213 aa).

In terms of domain architecture, ABC transporter spans 5–212; the sequence is VTIENVSFNY…ATKTLEIKAL (208 aa). 37-44 lines the ATP pocket; the sequence is GESGSGKS.

It belongs to the ABC transporter superfamily. As to quaternary structure, the complex is composed of two ATP-binding proteins (EgtV) and two transmembrane proteins (EgtU).

Its subcellular location is the cell inner membrane. It catalyses the reaction ergothioneine(out) + ATP + H2O = ergothioneine(in) + ADP + phosphate + H(+). Functionally, part of the ABC transporter complex EgtUV involved in the uptake of ergothioneine (EGT), a natural low-molecular weight (LMW) thiol antioxidant which protects H.pylori against bleach stress. Responsible for energy coupling to the transport system. This chain is Ergothioneine transport ATP-binding protein EgtV, found in Helicobacter pylori (strain G27).